The chain runs to 165 residues: NADH-quinone oxidoreductase subunit I (165 aa).

4Fe-4S ferredoxin-type domains follow at residues His66–Thr98 and Ser109–Gly138. Residues Cys78, Cys81, Cys84, Cys88, Cys118, Cys121, Cys124, and Cys128 each coordinate [4Fe-4S] cluster.

The protein belongs to the complex I 23 kDa subunit family. As to quaternary structure, NDH-1 is composed of 14 different subunits. Subunits NuoA, H, J, K, L, M, N constitute the membrane sector of the complex. [4Fe-4S] cluster is required as a cofactor.

The protein resides in the cell inner membrane. The catalysed reaction is a quinone + NADH + 5 H(+)(in) = a quinol + NAD(+) + 4 H(+)(out). NDH-1 shuttles electrons from NADH, via FMN and iron-sulfur (Fe-S) centers, to quinones in the respiratory chain. The immediate electron acceptor for the enzyme in this species is believed to be ubiquinone. Couples the redox reaction to proton translocation (for every two electrons transferred, four hydrogen ions are translocated across the cytoplasmic membrane), and thus conserves the redox energy in a proton gradient. The chain is NADH-quinone oxidoreductase subunit I from Campylobacter fetus subsp. fetus (strain 82-40).